The sequence spans 109 residues: Serine protease inhibitor (109 aa).

An N-terminal signal peptide occupies residues 1–28 (MKMKLLQVHFVLLVSSSFLLGYTGMVTA). Intrachain disulfides connect Cys-43–Cys-83, Cys-52–Cys-79, Cys-58–Cys-73, Cys-62–Cys-104, and Cys-85–Cys-98. The 62-residue stretch at 43-104 (CRENEIFSQC…QGVCILENSC (62 aa)) folds into the TIL domain.

Belongs to the serine protease inhibitor-like (TIL domain-containing) family. Ubiquitously expressed (at protein level), including in venom glands. Found more precisely in the epidermis, fat body, gut, muscle, and venom of worker bees.

The protein resides in the secreted. Functionally, dual role peptide that functions as a broad-spectrum antimicrobial peptide and antifibrinolytic toxin. Inhibits trypsin (IC(50)=375 nM), plasmin (IC(50)=2140 nM), and microbial serine proteases (subtilisin A (IC(50)=294 nM) and proteinase K (IC(50)=459 nM)). Exhibits antifibrinolytic activity by binding and inhibiting plasmin. Does not inhibit chymotrypsin, elastase or thrombin. Binds to microbial cell wall carbohydrates (LPS, mannan and N-acetyl-D-glucosamine) and shows antimicrobial activity (MIC=4.1 uM against B.thuringiensis, MIC=4.95 uM against E.coli, MIC=9.6 uM against the fungus B.bassiana). Does not show hemolytic activity. The sequence is that of Serine protease inhibitor from Bombus ignitus (Bumblebee).